A 373-amino-acid chain; its full sequence is 4-hydroxy-3-methylbut-2-en-1-yl diphosphate synthase (flavodoxin) (373 aa).

Residues cysteine 270, cysteine 273, cysteine 305, and glutamate 312 each contribute to the [4Fe-4S] cluster site.

The protein belongs to the IspG family. [4Fe-4S] cluster serves as cofactor.

It catalyses the reaction (2E)-4-hydroxy-3-methylbut-2-enyl diphosphate + oxidized [flavodoxin] + H2O + 2 H(+) = 2-C-methyl-D-erythritol 2,4-cyclic diphosphate + reduced [flavodoxin]. It participates in isoprenoid biosynthesis; isopentenyl diphosphate biosynthesis via DXP pathway; isopentenyl diphosphate from 1-deoxy-D-xylulose 5-phosphate: step 5/6. In terms of biological role, converts 2C-methyl-D-erythritol 2,4-cyclodiphosphate (ME-2,4cPP) into 1-hydroxy-2-methyl-2-(E)-butenyl 4-diphosphate. This is 4-hydroxy-3-methylbut-2-en-1-yl diphosphate synthase (flavodoxin) from Pectobacterium atrosepticum (strain SCRI 1043 / ATCC BAA-672) (Erwinia carotovora subsp. atroseptica).